We begin with the raw amino-acid sequence, 149 residues long: Large ribosomal subunit protein bL9 (149 aa).

It belongs to the bacterial ribosomal protein bL9 family.

Binds to the 23S rRNA. This chain is Large ribosomal subunit protein bL9, found in Helicobacter acinonychis (strain Sheeba).